We begin with the raw amino-acid sequence, 369 residues long: uncharacterized protein (369 aa).

Position 184 is an N6-(pyridoxal phosphate)lysine (K184).

Belongs to the class-V pyridoxal-phosphate-dependent aminotransferase family. Pyridoxal 5'-phosphate serves as cofactor.

This is an uncharacterized protein from Helicobacter pylori (strain J99 / ATCC 700824) (Campylobacter pylori J99).